Consider the following 1264-residue polypeptide: Valine--tRNA ligase (1264 aa).

Residue S2 is modified to N-acetylserine. Residues 89-219 (GSRAAVLVQQ…YSGARPLSHQ (131 aa)) form the GST C-terminal domain. Residues 217–296 (SHQPGPEAPA…GEKKDVSGPM (80 aa)) are disordered. Composition is skewed to basic and acidic residues over residues 234–248 (LKKE…EKFQ) and 261–275 (GEKK…KRDP). The 'HIGH' region motif lies at 344–354 (PNVTGSLHLGH). Phosphoserine occurs at positions 437 and 527. An N6-acetyllysine modification is found at K645. The short motif at 862–866 (KMSKS) is the 'KMSKS' region element. Position 865 (K865) interacts with ATP.

This sequence belongs to the class-I aminoacyl-tRNA synthetase family. Forms high-molecular-mass aggregates with elongation factor 1.

The enzyme catalyses tRNA(Val) + L-valine + ATP = L-valyl-tRNA(Val) + AMP + diphosphate. Its activity is regulated as follows. Can be regulated by protein kinase C-dependent phosphorylation. Catalyzes the attachment of valine to tRNA(Val). This chain is Valine--tRNA ligase, found in Homo sapiens (Human).